The chain runs to 291 residues: Tyramine--L-glutamate ligase (291 aa).

The region spanning Lys-104–Asn-274 is the ATP-grasp domain. Lys-131–Ser-176 is an ATP binding site. Residues Asp-236, Glu-247, and Asn-249 each contribute to the Mg(2+) site. Asp-236, Glu-247, and Asn-249 together coordinate Mn(2+).

It depends on Mg(2+) as a cofactor. Mn(2+) is required as a cofactor.

The catalysed reaction is tyramine + L-glutamate + ATP = gamma-L-glutamyltyramine + ADP + phosphate + H(+). It participates in cofactor biosynthesis; methanofuran biosynthesis. Functionally, catalyzes the formation of an amide bond between tyramine and the gamma carboxy group of L-glutamate. The enzyme also accepts phenylethylamine in vitro. This chain is Tyramine--L-glutamate ligase, found in Methanocaldococcus fervens (strain DSM 4213 / JCM 15782 / AG86) (Methanococcus fervens).